The primary structure comprises 670 residues: Putative segment polarity protein dishevelled homolog DVL1P1 (670 aa).

The DIX domain maps to 1–85; it reads MAETKIIYHM…RVVSWLVLVE (85 aa). Positions 89–240 are disordered; the sequence is SDAGSQGTDS…ADRASSFSSM (152 aa). A compositionally biased stretch (basic residues) spans 142 to 151; that stretch reads SHRRDRARRR. Residues 152–171 show a composition bias toward basic and acidic residues; sequence NREEAARTNGHPRGDRRRDV. Low complexity-rich tracts occupy residues 176 to 192 and 201 to 214; these read DSAS…SSFV and SRLS…TSSR. A compositionally biased stretch (basic residues) spans 215-228; sequence LIRKHKRRRRKQRL. In terms of domain architecture, PDZ spans 251 to 323; the sequence is TVTLNMERHH…NDDAVRVLRE (73 aa). A DEP domain is found at 400-474; the sequence is PDSGLEIRDR…SEQCYYVFGD (75 aa). The tract at residues 518 to 642 is disordered; sequence PGPPPCFPPA…PGGPPVRELA (125 aa). Low complexity-rich tracts occupy residues 526-553 and 600-614; these read PAYQ…SSGS and SRGS…SYAP.

The protein belongs to the DSH family. As to expression, expressed in thymus, heart, liver, kidney, brain, skeletal muscle, and pancreas.

The protein localises to the cytoplasm. Its function is as follows. May play a role in the signal transduction pathway mediated by multiple Wnt genes. The sequence is that of Putative segment polarity protein dishevelled homolog DVL1P1 (DVL1P1) from Homo sapiens (Human).